The sequence spans 510 residues: NAD(P)H-quinone oxidoreductase subunit 2 B, chloroplastic (510 aa).

13 helical membrane passes run Leu-24 to Leu-44, Ile-57 to Phe-77, Ile-99 to Ile-119, Met-124 to Cys-144, Leu-149 to Tyr-169, Tyr-183 to Gly-203, Pro-227 to Ala-247, Trp-295 to Ile-315, Met-323 to Asp-343, Gly-347 to Ala-367, Ala-395 to Phe-415, Leu-418 to Leu-438, and Leu-482 to Ile-502.

It belongs to the complex I subunit 2 family. As to quaternary structure, NDH is composed of at least 16 different subunits, 5 of which are encoded in the nucleus.

It is found in the plastid. The protein resides in the chloroplast thylakoid membrane. The enzyme catalyses a plastoquinone + NADH + (n+1) H(+)(in) = a plastoquinol + NAD(+) + n H(+)(out). It carries out the reaction a plastoquinone + NADPH + (n+1) H(+)(in) = a plastoquinol + NADP(+) + n H(+)(out). Its function is as follows. NDH shuttles electrons from NAD(P)H:plastoquinone, via FMN and iron-sulfur (Fe-S) centers, to quinones in the photosynthetic chain and possibly in a chloroplast respiratory chain. The immediate electron acceptor for the enzyme in this species is believed to be plastoquinone. Couples the redox reaction to proton translocation, and thus conserves the redox energy in a proton gradient. This chain is NAD(P)H-quinone oxidoreductase subunit 2 B, chloroplastic, found in Cucumis sativus (Cucumber).